Reading from the N-terminus, the 132-residue chain is Fatty acid-binding protein, adipocyte (132 aa).

N-acetylcysteine is present on Cys-2. Ser-13 carries the phosphoserine modification. The residue at position 20 (Tyr-20) is a Phosphotyrosine; by Tyr-kinases. The Nuclear localization signal signature appears at Lys-22–Lys-32. Arg-127–Tyr-129 is a binding site for a fatty acid.

The protein belongs to the calycin superfamily. Fatty-acid binding protein (FABP) family. In terms of assembly, monomer. Homodimer. Interacts with PPARG.

It localises to the cytoplasm. The protein resides in the nucleus. Lipid transport protein in adipocytes. Binds both long chain fatty acids and retinoic acid. Delivers long-chain fatty acids and retinoic acid to their cognate receptors in the nucleus. The protein is Fatty acid-binding protein, adipocyte (Fabp4) of Rattus norvegicus (Rat).